The sequence spans 486 residues: MTNTFYLLPVEIWVKIVNFSNETSLLLTNKEFFELSSLINVEQNIFEYVIRNDYWHILDYVSNLEKNKSEKYPIVCKFKEYTNDLFKYVIEFCISGKLDSIKRLVSMGANVREHNDVALNRAVENGHMDIFEYLISKGADLYANKNTLVRCASYGGNLDMVKYLISIGANFRENCDTPLIWACHNGHLEIVKYLVDQGADVNSQSHKSIITASKMGHLGIVKYLVSKTTNIDWRHNYAAAFAAQNNHLEIVKYLVNEGANLEIEDGCIIRVAAKNGHLDIVKYLVSLGMEIGFKKILIGTSNFGVVNKITPVIGSAVEGGHLSMVKYFVSIGATIKEKNYAFVKAAEYGHLEIIKYLVSQGISLEKKINKALIVACSKGHLEIVKYLVENGANVKTNEGLPLRQACWGNYLDIAKYLVSNGADVTSYDNYALKTALEKGDLETVKYFIYVGANVNDISSWDLKFISVLGRSEVLEYLKSTFNIKLS.

ANK repeat units lie at residues 84-113, 114-143, 145-173, 174-203, 205-233, 234-263, 265-293, 307-336, 337-366, 367-396, 398-426, and 427-456; these read DLFKYVIEFCISGKLDSIKRLVSMGANVRE, HNDVALNRAVENGHMDIFEYLISKGADLYA, KNTLVRCASYGGNLDMVKYLISIGANFRE, NCDTPLIWACHNGHLEIVKYLVDQGADVNS, SHKSIITASKMGHLGIVKYLVSKTTNIDW, RHNYAAAFAAQNNHLEIVKYLVNEGANLEI, DGCIIRVAAKNGHLDIVKYLVSLGMEIGF, NKITPVIGSAVEGGHLSMVKYFVSIGATIK, EKNYAFVKAAEYGHLEIIKYLVSQGISLEK, KINKALIVACSKGHLEIVKYLVENGANVKT, EGLPLRQACWGNYLDIAKYLVSNGADVTS, and YDNYALKTALEKGDLETVKYFIYVGANVND.

The sequence is that of Putative ankyrin repeat protein R634 from Acanthamoeba polyphaga (Amoeba).